We begin with the raw amino-acid sequence, 121 residues long: Small ribosomal subunit protein uS13 (121 aa).

The tract at residues 91–121 is disordered; that stretch reads HKRGLPVRGQRTRTNARTRKGPRRAAASLKK.

This sequence belongs to the universal ribosomal protein uS13 family. As to quaternary structure, part of the 30S ribosomal subunit. Forms a loose heterodimer with protein S19. Forms two bridges to the 50S subunit in the 70S ribosome.

Its function is as follows. Located at the top of the head of the 30S subunit, it contacts several helices of the 16S rRNA. In the 70S ribosome it contacts the 23S rRNA (bridge B1a) and protein L5 of the 50S subunit (bridge B1b), connecting the 2 subunits; these bridges are implicated in subunit movement. Contacts the tRNAs in the A and P-sites. In Bordetella avium (strain 197N), this protein is Small ribosomal subunit protein uS13.